The following is a 124-amino-acid chain: Small ribosomal subunit protein uS12 (124 aa).

D89 is modified (3-methylthioaspartic acid).

This sequence belongs to the universal ribosomal protein uS12 family. In terms of assembly, part of the 30S ribosomal subunit. Contacts proteins S8 and S17. May interact with IF1 in the 30S initiation complex.

In terms of biological role, with S4 and S5 plays an important role in translational accuracy. Interacts with and stabilizes bases of the 16S rRNA that are involved in tRNA selection in the A site and with the mRNA backbone. Located at the interface of the 30S and 50S subunits, it traverses the body of the 30S subunit contacting proteins on the other side and probably holding the rRNA structure together. The combined cluster of proteins S8, S12 and S17 appears to hold together the shoulder and platform of the 30S subunit. This is Small ribosomal subunit protein uS12 from Shewanella loihica (strain ATCC BAA-1088 / PV-4).